Consider the following 754-residue polypeptide: uncharacterized protein (754 aa).

The next 10 membrane-spanning stretches (helical) occupy residues 3–23 (ITTV…LPQL), 24–44 (PGTL…FIPV), 50–70 (IALT…ILWA), 223–243 (HLMA…AGLI), 254–274 (WIHW…YAWL), 320–340 (VAIL…LIFW), 370–390 (LLLM…SFIA), 392–412 (LLAI…AMVV), 446–466 (WINI…LLVV), and 471–491 (AWRT…WPLW).

The protein to B.subtilis ComEC, N.gonorrhoeae ComA, and H.influenzae Rec2.

Its subcellular location is the cell membrane. This is an uncharacterized protein from Escherichia coli (strain K12).